Here is a 141-residue protein sequence, read N- to C-terminus: Small ribosomal subunit protein uS12 (141 aa).

It belongs to the universal ribosomal protein uS12 family. In terms of assembly, part of the 30S ribosomal subunit.

Functionally, with S4 and S5 plays an important role in translational accuracy. Located at the interface of the 30S and 50S subunits. This Methanosphaera stadtmanae (strain ATCC 43021 / DSM 3091 / JCM 11832 / MCB-3) protein is Small ribosomal subunit protein uS12.